The primary structure comprises 55 residues: Large ribosomal subunit protein bL33 (55 aa).

It belongs to the bacterial ribosomal protein bL33 family.

This Granulibacter bethesdensis (strain ATCC BAA-1260 / CGDNIH1) protein is Large ribosomal subunit protein bL33.